The sequence spans 258 residues: Tryptophan synthase alpha chain (258 aa).

Catalysis depends on proton acceptor residues Glu52 and Asp63.

It belongs to the TrpA family. As to quaternary structure, tetramer of two alpha and two beta chains.

The enzyme catalyses (1S,2R)-1-C-(indol-3-yl)glycerol 3-phosphate + L-serine = D-glyceraldehyde 3-phosphate + L-tryptophan + H2O. It participates in amino-acid biosynthesis; L-tryptophan biosynthesis; L-tryptophan from chorismate: step 5/5. Functionally, the alpha subunit is responsible for the aldol cleavage of indoleglycerol phosphate to indole and glyceraldehyde 3-phosphate. This Streptococcus pneumoniae (strain ATCC 700669 / Spain 23F-1) protein is Tryptophan synthase alpha chain.